Here is a 1241-residue protein sequence, read N- to C-terminus: ATP-dependent helicase/nuclease subunit A (1241 aa).

One can recognise a UvrD-like helicase ATP-binding domain in the interval 12–485 (SQWTDDQWKA…IDLAKNFRSR (474 aa)). 33-40 (AAAGSGKT) contributes to the ATP binding site. The UvrD-like helicase C-terminal domain maps to 505 to 805 (GEIDYDADAE…RIMTIHKSKG (301 aa)).

Belongs to the helicase family. AddA subfamily. Heterodimer of AddA and AddB/RexB. The cofactor is Mg(2+).

It carries out the reaction Couples ATP hydrolysis with the unwinding of duplex DNA by translocating in the 3'-5' direction.. The catalysed reaction is ATP + H2O = ADP + phosphate + H(+). The heterodimer acts as both an ATP-dependent DNA helicase and an ATP-dependent, dual-direction single-stranded exonuclease. Recognizes the chi site generating a DNA molecule suitable for the initiation of homologous recombination. The AddA nuclease domain is required for chi fragment generation; this subunit has the helicase and 3' -&gt; 5' nuclease activities. In Bacillus cereus (strain ZK / E33L), this protein is ATP-dependent helicase/nuclease subunit A.